The following is a 122-amino-acid chain: Large ribosomal subunit protein uL18 (122 aa).

Residues 1–27 (MATLSKKQQTQKRHKRLRRHLNGTNHR) form a disordered region. Residues 9–27 (QTQKRHKRLRRHLNGTNHR) are compositionally biased toward basic residues.

Belongs to the universal ribosomal protein uL18 family. As to quaternary structure, part of the 50S ribosomal subunit; part of the 5S rRNA/L5/L18/L25 subcomplex. Contacts the 5S and 23S rRNAs.

Its function is as follows. This is one of the proteins that bind and probably mediate the attachment of the 5S RNA into the large ribosomal subunit, where it forms part of the central protuberance. In Prochlorococcus marinus (strain MIT 9211), this protein is Large ribosomal subunit protein uL18.